The following is a 169-amino-acid chain: Non-specific lipid transfer protein GPI-anchored 11 (169 aa).

The first 23 residues, 1–23 (MAYATILMIFSVVALMSGERAHA), serve as a signal peptide directing secretion. Intrachain disulfides connect Cys27-Cys70, Cys37-Cys54, Cys55-Cys95, and Cys68-Cys105. A lipid anchor (GPI-anchor amidated serine) is attached at Ser146. The propeptide at 147-169 (SDASLLSVSFAFVIFMALISSFY) is removed in mature form.

Belongs to the plant LTP family. Expressed in a vascular-specific manner, mainly in roots, and, to a lower extent, in hypocotyls, seedlings stems and flowers.

The protein resides in the cell membrane. The protein localises to the secreted. Probable lipid transfer protein. Proteoglycan-like factor that exhibits xylogen activity consisting in mediating local and inductive cell-cell interactions required for xylem differentiation. The chain is Non-specific lipid transfer protein GPI-anchored 11 from Arabidopsis thaliana (Mouse-ear cress).